A 473-amino-acid polypeptide reads, in one-letter code: MTTCSRQFTSSSSMKGSCGIGGGIGGGSSRISSVLAGGSCRAPSTYGGGLSVSSRFSSGGACGLGGGYGGGFSSSSSFGSGFGGGYGGGLGAGFGGGLGAGFGGGFAGGDGLLVGSEKVTMQNLNDRLASYLDKVRALEEANADLEVKIRDWYQRQRPSEIKDYSPYFKTIEDLRNKIIAATIENAQPILQIDNARLAADDFRTKYEHELALRQTVEADVNGLRRVLDELTLARTDLEMQIEGLKEELAYLRKNHEEEMLALRGQTGGDVNVEMDAAPGVDLSRILNEMRDQYEQMAEKNRRDAETWFLSKTEELNKEVASNSELVQSSRSEVTELRRVLQGLEIELQSQLSMKASLENSLEETKGRYCMQLSQIQGLIGSVEEQLAQLRCEMEQQSQEYQILLDVKTRLEQEIATYRRLLEGEDAHLSSQQASGQSYSSREVFTSSSSSSSRQTRPILKEQSSSSFSQGQSS.

The tract at residues 1–116 (MTTCSRQFTS…AGGDGLLVGS (116 aa)) is head. The coil 1A stretch occupies residues 117–152 (EKVTMQNLNDRLASYLDKVRALEEANADLEVKIRDW). The region spanning 117-428 (EKVTMQNLND…RLLEGEDAHL (312 aa)) is the IF rod domain. Residues 153-170 (YQRQRPSEIKDYSPYFKT) are linker 1. Residues 171–262 (IEDLRNKIIA…KNHEEEMLAL (92 aa)) form a coil 1B region. The segment at 263 to 285 (RGQTGGDVNVEMDAAPGVDLSRI) is linker 12. The interval 286 to 424 (LNEMRDQYEQ…ATYRRLLEGE (139 aa)) is coil 2. Residues 425 to 473 (DAHLSSQQASGQSYSSREVFTSSSSSSSRQTRPILKEQSSSSFSQGQSS) form a tail region. The segment at 428–473 (LSSQQASGQSYSSREVFTSSSSSSSRQTRPILKEQSSSSFSQGQSS) is disordered. 2 stretches are compositionally biased toward low complexity: residues 429–452 (SSQQ…SSSS) and 462–473 (QSSSSFSQGQSS).

This sequence belongs to the intermediate filament family. Heterodimer of a type I and a type II keratin. KRT16 associates with KRT6 isomers (KRT6A or KRT6B). Interacts with TCHP. Interacts with TRADD. Expressed in the corneal epithelium (at protein level).

Its function is as follows. Epidermis-specific type I keratin that plays a key role in skin. Acts as a regulator of innate immunity in response to skin barrier breach: required for some inflammatory checkpoint for the skin barrier maintenance. This is Keratin, type I cytoskeletal 16 (KRT16) from Homo sapiens (Human).